Here is a 277-residue protein sequence, read N- to C-terminus: 3-methyl-2-oxobutanoate hydroxymethyltransferase (277 aa).

Mg(2+)-binding residues include Asp-43 and Asp-82. 3-methyl-2-oxobutanoate contacts are provided by residues 43 to 44 (DS), Asp-82, and Lys-112. A Mg(2+)-binding site is contributed by Glu-114. Glu-181 acts as the Proton acceptor in catalysis.

The protein belongs to the PanB family. In terms of assembly, homodecamer; pentamer of dimers. Mg(2+) serves as cofactor.

The protein localises to the cytoplasm. It catalyses the reaction 3-methyl-2-oxobutanoate + (6R)-5,10-methylene-5,6,7,8-tetrahydrofolate + H2O = 2-dehydropantoate + (6S)-5,6,7,8-tetrahydrofolate. It functions in the pathway cofactor biosynthesis; (R)-pantothenate biosynthesis; (R)-pantoate from 3-methyl-2-oxobutanoate: step 1/2. Functionally, catalyzes the reversible reaction in which hydroxymethyl group from 5,10-methylenetetrahydrofolate is transferred onto alpha-ketoisovalerate to form ketopantoate. This is 3-methyl-2-oxobutanoate hydroxymethyltransferase from Exiguobacterium sp. (strain ATCC BAA-1283 / AT1b).